The primary structure comprises 207 residues: Small ribosomal subunit protein uS4A (207 aa).

In terms of domain architecture, S4 RNA-binding spans 98 to 163 (TRLDNLVYRL…SPKFKELKEN (66 aa)).

The protein belongs to the universal ribosomal protein uS4 family. Part of the 30S ribosomal subunit. Contacts protein S5. The interaction surface between S4 and S5 is involved in control of translational fidelity.

Its function is as follows. One of the primary rRNA binding proteins, it binds directly to 16S rRNA where it nucleates assembly of the body of the 30S subunit. Functionally, with S5 and S12 plays an important role in translational accuracy. The protein is Small ribosomal subunit protein uS4A of Alkaliphilus metalliredigens (strain QYMF).